A 313-amino-acid chain; its full sequence is MSFPTVFIDGDQGTTGLQIHARLRDRTDVRLLTLPAAERKDPARRADALNACDIAVLCLPDAAAREAVGFIRNPAVRVIDASSAHRTQPDWVYGFPEMADGHAQDIAHAKRVTNPGCYPTGAIGLLRPLLQAGLLPRDYPVSIHAVSGYSGGGRAAVDAFESADAATPPLPLQVYGLALEHKHVPEIRQHAGLAHRPFFVPAYGAYRQGIVLTIPIELRLLPAGVTGERLHACLAHHYADARHVDVTPLADAAAATHLDPQALNGTNDLRLGVFVNEARGQVLLSAVFDNLGKGASGAAVQNLDLMLGASSAA.

Residue Cys117 is part of the active site.

The protein belongs to the NAGSA dehydrogenase family. Type 2 subfamily.

Its subcellular location is the cytoplasm. It catalyses the reaction N-acetyl-L-glutamate 5-semialdehyde + phosphate + NADP(+) = N-acetyl-L-glutamyl 5-phosphate + NADPH + H(+). It participates in amino-acid biosynthesis; L-arginine biosynthesis; N(2)-acetyl-L-ornithine from L-glutamate: step 3/4. Catalyzes the NADPH-dependent reduction of N-acetyl-5-glutamyl phosphate to yield N-acetyl-L-glutamate 5-semialdehyde. The polypeptide is N-acetyl-gamma-glutamyl-phosphate reductase (Burkholderia cenocepacia (strain ATCC BAA-245 / DSM 16553 / LMG 16656 / NCTC 13227 / J2315 / CF5610) (Burkholderia cepacia (strain J2315))).